We begin with the raw amino-acid sequence, 494 residues long: UDP-N-acetylmuramate--L-alanine ligase (494 aa).

Gly140–Thr146 lines the ATP pocket.

It belongs to the MurCDEF family.

It localises to the cytoplasm. The catalysed reaction is UDP-N-acetyl-alpha-D-muramate + L-alanine + ATP = UDP-N-acetyl-alpha-D-muramoyl-L-alanine + ADP + phosphate + H(+). It functions in the pathway cell wall biogenesis; peptidoglycan biosynthesis. Its function is as follows. Cell wall formation. The protein is UDP-N-acetylmuramate--L-alanine ligase of Nostoc sp. (strain PCC 7120 / SAG 25.82 / UTEX 2576).